We begin with the raw amino-acid sequence, 250 residues long: Probable transcriptional regulatory protein PERMA_0079 (250 aa).

It belongs to the TACO1 family.

It localises to the cytoplasm. This is Probable transcriptional regulatory protein PERMA_0079 from Persephonella marina (strain DSM 14350 / EX-H1).